We begin with the raw amino-acid sequence, 120 residues long: Large ribosomal subunit protein P3 (120 aa).

The disordered stretch occupies residues 83–120 (GGGGAAASGGAAAEAPKEEKKEEEKEESDDDMGFSLFD).

Belongs to the eukaryotic ribosomal protein P1/P2 family. Post-translationally, phosphorylated.

Functionally, plays an important role in the elongation step of protein synthesis. The chain is Large ribosomal subunit protein P3 (RPP3A) from Zea mays (Maize).